The primary structure comprises 335 residues: Dihydroorotate dehydrogenase (quinone) (335 aa).

Residues 59–63 (AGADK) and T83 each bind FMN. Substrate is bound at residue K63. Substrate is bound at residue 108–112 (NRNGF). Residues N136 and N169 each coordinate FMN. N169 serves as a coordination point for substrate. S172 functions as the Nucleophile in the catalytic mechanism. Substrate is bound at residue N174. K214 and G242 together coordinate FMN. 243 to 244 (NT) lines the substrate pocket. Residues G265, G294, and 315–316 (YS) each bind FMN.

Belongs to the dihydroorotate dehydrogenase family. Type 2 subfamily. Monomer. The cofactor is FMN.

It is found in the cell membrane. It catalyses the reaction (S)-dihydroorotate + a quinone = orotate + a quinol. It functions in the pathway pyrimidine metabolism; UMP biosynthesis via de novo pathway; orotate from (S)-dihydroorotate (quinone route): step 1/1. Its function is as follows. Catalyzes the conversion of dihydroorotate to orotate with quinone as electron acceptor. The chain is Dihydroorotate dehydrogenase (quinone) from Glaesserella parasuis serovar 5 (strain SH0165) (Haemophilus parasuis).